Here is a 273-residue protein sequence, read N- to C-terminus: Sanguinarine reductase (273 aa).

Residue Ser153 is the Proton donor of the active site. Substrate-binding positions include 157–161 (CDPDH) and Lys175.

Belongs to the NAD(P)-dependent epimerase/dehydratase family. Monomer.

The catalysed reaction is dihydrosanguinarine + NADP(+) = sanguinarine + NADPH. It carries out the reaction dihydrosanguinarine + NAD(+) = sanguinarine + NADH. The enzyme catalyses dihydrochelirubine + NAD(+) = chelirubine + NADH. It catalyses the reaction dihydrochelirubine + NADP(+) = chelirubine + NADPH. Its activity is regulated as follows. Inhibited by iodoacetamide and irreversibly by its product, dihydrosanguinarine. Its function is as follows. Catalyzes the reduction of benzophenanthridines, preferentially sanguinarine, to the corresponding dihydroalkaloids. Involved in detoxifying the phytoalexins produced by plant itself. The sanguinarine produced by intact cells upon elicitation, after excretion and binding to cell wall elements, is rapidly reabsorbed and reduced to the less toxic dihydrosanguinarine. Can work with both NAD(P) or NAD as a hydrogen donor, but at low concentrations, the reaction velocity with NAD(P)H is threefold higher than with NADH. However, chelerythrine shows maximum conversion rates with NADH. The substrate preference is sanguinarine &gt; chelerythrine &gt; chelirubine, macarpine or 10-OH-chelerythrine. No activity with berberine or phenanthridine cations. In Eschscholzia californica (California poppy), this protein is Sanguinarine reductase.